A 372-amino-acid polypeptide reads, in one-letter code: Cobalt-precorrin-5B C(1)-methyltransferase (372 aa).

The protein belongs to the CbiD family.

It carries out the reaction Co-precorrin-5B + S-adenosyl-L-methionine = Co-precorrin-6A + S-adenosyl-L-homocysteine. Its pathway is cofactor biosynthesis; adenosylcobalamin biosynthesis; cob(II)yrinate a,c-diamide from sirohydrochlorin (anaerobic route): step 6/10. In terms of biological role, catalyzes the methylation of C-1 in cobalt-precorrin-5B to form cobalt-precorrin-6A. This chain is Cobalt-precorrin-5B C(1)-methyltransferase, found in Prochlorococcus marinus subsp. pastoris (strain CCMP1986 / NIES-2087 / MED4).